The primary structure comprises 867 residues: Putative tyrosine-protein kinase F09A5.2 (867 aa).

2 helical membrane-spanning segments follow: residues 45 to 65 and 355 to 375; these read VMKILSGFSLIIIVVFIFATS and LLLIIGIPCISLTICCIAFFV. N-linked (GlcNAc...) asparagine glycans are attached at residues asparagine 395 and asparagine 423. Residues 467-757 enclose the Protein kinase domain; the sequence is VQEDHLLGNG…FNEMRGEITV (291 aa). Position 473–481 (473–481) interacts with ATP; that stretch reads LGNGAFANV. Asparagine 496 and asparagine 500 each carry an N-linked (GlcNAc...) asparagine glycan. ATP is bound at residue lysine 516. Residue asparagine 585 is glycosylated (N-linked (GlcNAc...) asparagine). The Proton acceptor role is filled by aspartate 626. Disordered stretches follow at residues 782–821 and 848–867; these read LTMQDSKETAPCSTPGGSQDMDEDGDYDSGSEGHSQGTCA and SKSMRGKRRQSNSTVSTYQS. Acidic residues predominate over residues 801–810; it reads DMDEDGDYDS. Positions 858–867 are enriched in polar residues; it reads SNSTVSTYQS. A glycan (N-linked (GlcNAc...) asparagine) is linked at asparagine 859.

The protein belongs to the protein kinase superfamily. Tyr protein kinase family.

The protein resides in the membrane. It catalyses the reaction L-tyrosyl-[protein] + ATP = O-phospho-L-tyrosyl-[protein] + ADP + H(+). The protein is Putative tyrosine-protein kinase F09A5.2 of Caenorhabditis elegans.